Here is a 1382-residue protein sequence, read N- to C-terminus: Suppressor of organelle fusion 2 (1382 aa).

The BEACH domain maps to 229 to 463; the sequence is RIPLDEATSN…QLFNRPHPIR (235 aa). WD repeat units follow at residues 1094-1133 and 1140-1176; these read GHQE…DEIG and KHTR…LLAQ.

Belongs to the WD repeat WDR81 family. As to quaternary structure, interacts with sorf-1; the interaction is direct. Interacts with bec-1.

It localises to the early endosome. Its subcellular location is the late endosome. The protein localises to the cytoplasm. In terms of biological role, together with sorf-1 negatively regulates the levels of phosphatidylinositol 3-phosphate (PtdIns3P) to enable the conversion of early endosomes to late endosomes. Binds to sorf-1 and the sorf-1-sorf-2 complex likely acts through bec-1, a non-catalytic subunit of phosphatidylinositol 3-kinase (PI3K), to suppress PI3K activity, thereby negatively regulating endosomal PtdIns3P levels. In Caenorhabditis elegans, this protein is Suppressor of organelle fusion 2.